The sequence spans 311 residues: Acetaldehyde dehydrogenase 2 (311 aa).

11–14 (SGNI) is a binding site for NAD(+). The Acyl-thioester intermediate role is filled by C131. NAD(+)-binding positions include 162–170 (SAGPGTRAN) and N289.

This sequence belongs to the acetaldehyde dehydrogenase family.

It catalyses the reaction acetaldehyde + NAD(+) + CoA = acetyl-CoA + NADH + H(+). This is Acetaldehyde dehydrogenase 2 (mhpF) from Azotobacter vinelandii (strain DJ / ATCC BAA-1303).